Consider the following 206-residue polypeptide: Small ribosomal subunit protein uS4 (206 aa).

The region spanning 96-156 is the S4 RNA-binding domain; that stretch reads GRLDNVVYRM…EKAKQQARIK (61 aa).

This sequence belongs to the universal ribosomal protein uS4 family. Part of the 30S ribosomal subunit. Contacts protein S5. The interaction surface between S4 and S5 is involved in control of translational fidelity.

Functionally, one of the primary rRNA binding proteins, it binds directly to 16S rRNA where it nucleates assembly of the body of the 30S subunit. In terms of biological role, with S5 and S12 plays an important role in translational accuracy. The polypeptide is Small ribosomal subunit protein uS4 (Vibrio campbellii (strain ATCC BAA-1116)).